The primary structure comprises 87 residues: Transcription factor ILI4 (87 aa).

In terms of domain architecture, bHLH spans 1 to 54 (MSSRRSSRSSVSEEEINELISKLQSLLPSSRRRGANQASTTKLLKETCSYIKSL).

The protein belongs to the bHLH protein family. In terms of assembly, interacts with LO9-177. Expressed in phloem of leaf blades and sheaths, lamina joints, filaments before anthesis, vasculare bundles of the ovule, lemma and palea, and embryos.

Its subcellular location is the cytoplasm. Atypical and probable non DNA-binding bHLH transcription factor that acts as a positive regulator of brassinosteroid (BR) response. Controls lamina inclination by participating in two BR signaling pathways involving BRI1 and RGA1. Involved in the RLI1-dependent modulation of leaf inclination by promoting lamina joint cell elongation, especially in response to phosphate (Pi) availability. The sequence is that of Transcription factor ILI4 (ILI4) from Oryza sativa subsp. japonica (Rice).